The following is a 276-amino-acid chain: NH(3)-dependent NAD(+) synthetase (276 aa).

47 to 54 (GISGGQDS) provides a ligand contact to ATP. Asp-53 contacts Mg(2+). Residue Arg-141 coordinates deamido-NAD(+). Thr-161 provides a ligand contact to ATP. Mg(2+) is bound at residue Glu-166. Positions 174 and 181 each coordinate deamido-NAD(+). Lys-190 and Thr-212 together coordinate ATP. Deamido-NAD(+) is bound at residue 261-262 (HK).

Belongs to the NAD synthetase family. In terms of assembly, homodimer.

It catalyses the reaction deamido-NAD(+) + NH4(+) + ATP = AMP + diphosphate + NAD(+) + H(+). Its pathway is cofactor biosynthesis; NAD(+) biosynthesis; NAD(+) from deamido-NAD(+) (ammonia route): step 1/1. Its function is as follows. Catalyzes the ATP-dependent amidation of deamido-NAD to form NAD. Uses ammonia as a nitrogen source. This Levilactobacillus brevis (strain ATCC 367 / BCRC 12310 / CIP 105137 / JCM 1170 / LMG 11437 / NCIMB 947 / NCTC 947) (Lactobacillus brevis) protein is NH(3)-dependent NAD(+) synthetase.